A 154-amino-acid chain; its full sequence is Regulatory protein RecX (154 aa).

This sequence belongs to the RecX family.

The protein localises to the cytoplasm. Functionally, modulates RecA activity. This is Regulatory protein RecX from Trichlorobacter lovleyi (strain ATCC BAA-1151 / DSM 17278 / SZ) (Geobacter lovleyi).